We begin with the raw amino-acid sequence, 161 residues long: Peroxynitrite isomerase 2 (161 aa).

Positions 17-23 (GTWAGQG) match the GXWXGXG motif. His152 is a heme b binding site.

This sequence belongs to the nitrobindin family. Homodimer. Heme b serves as cofactor.

The enzyme catalyses peroxynitrite = nitrate. Its pathway is nitrogen metabolism. Its function is as follows. Heme-binding protein able to scavenge peroxynitrite and to protect free L-tyrosine against peroxynitrite-mediated nitration, by acting as a peroxynitrite isomerase that converts peroxynitrite to nitrate. Therefore, this protein likely plays a role in peroxynitrite sensing and in the detoxification of reactive nitrogen and oxygen species (RNS and ROS, respectively). Is able to bind nitric oxide (NO) in vitro, but may act as a sensor of peroxynitrite levels in vivo. The polypeptide is Peroxynitrite isomerase 2 (Mycobacterium ulcerans (strain Agy99)).